The chain runs to 445 residues: tRNA(Ile)-lysidine synthase (445 aa).

33–38 (SGGLDS) is an ATP binding site.

It belongs to the tRNA(Ile)-lysidine synthase family.

It localises to the cytoplasm. The enzyme catalyses cytidine(34) in tRNA(Ile2) + L-lysine + ATP = lysidine(34) in tRNA(Ile2) + AMP + diphosphate + H(+). Functionally, ligates lysine onto the cytidine present at position 34 of the AUA codon-specific tRNA(Ile) that contains the anticodon CAU, in an ATP-dependent manner. Cytidine is converted to lysidine, thus changing the amino acid specificity of the tRNA from methionine to isoleucine. This chain is tRNA(Ile)-lysidine synthase, found in Pseudomonas syringae pv. tomato (strain ATCC BAA-871 / DC3000).